The primary structure comprises 77 residues: NAD(P)H-quinone oxidoreductase subunit L (77 aa).

2 helical membrane passes run 12–32 (LIAYMGVITIYLLVIPLLLFY) and 47–67 (LGIYGLVFLFFPGLILFSPFL).

The protein belongs to the complex I NdhL subunit family. In terms of assembly, NDH-1 can be composed of about 15 different subunits; different subcomplexes with different compositions have been identified which probably have different functions.

The protein resides in the cellular thylakoid membrane. The catalysed reaction is a plastoquinone + NADH + (n+1) H(+)(in) = a plastoquinol + NAD(+) + n H(+)(out). It catalyses the reaction a plastoquinone + NADPH + (n+1) H(+)(in) = a plastoquinol + NADP(+) + n H(+)(out). In terms of biological role, NDH-1 shuttles electrons from an unknown electron donor, via FMN and iron-sulfur (Fe-S) centers, to quinones in the respiratory and/or the photosynthetic chain. The immediate electron acceptor for the enzyme in this species is believed to be plastoquinone. Couples the redox reaction to proton translocation, and thus conserves the redox energy in a proton gradient. Cyanobacterial NDH-1 also plays a role in inorganic carbon-concentration. This Prochlorococcus marinus (strain MIT 9312) protein is NAD(P)H-quinone oxidoreductase subunit L.